Here is a 274-residue protein sequence, read N- to C-terminus: Probable eukaryotic translation initiation factor 3 subunit J (274 aa).

Disordered stretches follow at residues 1–110 (MDSW…KEAM) and 207–245 (KEQQ…NVNS). Positions 38–47 (DEEDEDEEEN) are enriched in acidic residues. The span at 52–73 (QNDSHSVSQKSSSSSQNDQGSN) shows a compositional bias: low complexity. The segment covering 82–110 (IQERNFEKAIKASEAAAKEESLESSKEAM) has biased composition (basic and acidic residues). Positions 219–234 (AAAPAAKPVSTAAPSK) are enriched in low complexity.

The protein belongs to the eIF-3 subunit J family. In terms of assembly, component of the eukaryotic translation initiation factor 3 (eIF-3) complex. The eIF-3 complex appears to include tif32/eif3a, SPAC25G10.08/eif3b, tif33/eif3c, SPBC4C3.07/eif3f, tif35/eif3g and sum1/eif3i. This set of common subunits may also associate exclusively with either moe1/eif3d and int6/eif3e, or with SPAC821.05/eif3h and SPAC1751.03/eif3m. The eIF-3 complex may also include SPAC3A12.13c/eif3j. Interacts with sad1.

The protein localises to the cytoplasm. Component of the eukaryotic translation initiation factor 3 (eIF-3) complex, which is involved in protein synthesis of a specialized repertoire of mRNAs and, together with other initiation factors, stimulates binding of mRNA and methionyl-tRNAi to the 40S ribosome. The eIF-3 complex specifically targets and initiates translation of a subset of mRNAs involved in cell proliferation. In Schizosaccharomyces pombe (strain 972 / ATCC 24843) (Fission yeast), this protein is Probable eukaryotic translation initiation factor 3 subunit J.